The primary structure comprises 578 residues: Probable arginine--tRNA ligase, mitochondrial (578 aa).

Residues 1–16 (MACGFRRAIACQLSRV) constitute a mitochondrion transit peptide. L-arginine is bound by residues 133 to 135 (SPN), His144, Tyr322, Asp326, and Gln350. The 'HIGH' region motif lies at 133–144 (SPNVAKKFHVGH). At Lys568 the chain carries N6-acetyllysine.

This sequence belongs to the class-I aminoacyl-tRNA synthetase family.

The protein resides in the mitochondrion membrane. It catalyses the reaction tRNA(Arg) + L-arginine + ATP = L-arginyl-tRNA(Arg) + AMP + diphosphate. Its function is as follows. Catalyzes the attachment of arginine to tRNA(Arg) in a two-step reaction: arginine is first activated by ATP to form Arg-AMP and then transferred to the acceptor end of tRNA(Arg). This chain is Probable arginine--tRNA ligase, mitochondrial (RARS2), found in Pongo abelii (Sumatran orangutan).